A 508-amino-acid polypeptide reads, in one-letter code: Flavonoid 3',5'-hydroxylase 2 (508 aa).

Cys443 serves as a coordination point for heme.

Belongs to the cytochrome P450 family. Requires heme as cofactor. As to expression, flowers.

It localises to the microsome. It is found in the endoplasmic reticulum. It catalyses the reaction a 3',5'-unsubstituted flavanone + 2 reduced [NADPH--hemoprotein reductase] + 2 O2 = a 3',5'-dihydroxyflavanone + 2 oxidized [NADPH--hemoprotein reductase] + 2 H2O + 2 H(+). It participates in pigment biosynthesis; anthocyanin biosynthesis. Its function is as follows. Catalyzes the 3'5'-hydroxylation of naringenin and eriodictyol to form 5,7,3,'4',5'-pentahydroxyflavanone and 3',5'-hydroxylation of dihydrokaempferol and dihydroquercetin to form dihydromyricetin. The polypeptide is Flavonoid 3',5'-hydroxylase 2 (CYP75A3) (Petunia hybrida (Petunia)).